The primary structure comprises 226 residues: Ribonuclease 3 (226 aa).

Positions 6–128 constitute an RNase III domain; that stretch reads TNRLQKKLGY…LIGGVFLDSD (123 aa). A Mg(2+)-binding site is contributed by E41. D45 is a catalytic residue. Positions 114 and 117 each coordinate Mg(2+). Residue E117 is part of the active site. Residues 155–225 form the DRBM domain; that stretch reads DPKTRLQEYL…AEQALKLLEL (71 aa).

It belongs to the ribonuclease III family. In terms of assembly, homodimer. It depends on Mg(2+) as a cofactor.

It localises to the cytoplasm. The catalysed reaction is Endonucleolytic cleavage to 5'-phosphomonoester.. Its function is as follows. Digests double-stranded RNA. Involved in the processing of primary rRNA transcript to yield the immediate precursors to the large and small rRNAs (23S and 16S). Processes some mRNAs, and tRNAs when they are encoded in the rRNA operon. Processes pre-crRNA and tracrRNA of type II CRISPR loci if present in the organism. The sequence is that of Ribonuclease 3 from Sodalis glossinidius (strain morsitans).